We begin with the raw amino-acid sequence, 475 residues long: Homeobox even-skipped homolog protein 2 (475 aa).

Disordered regions lie at residues 82-113 (PSSE…AEAD) and 155-189 (TSAS…SGAD). The span at 83–96 (SSESTVSSEIASAT) shows a compositional bias: low complexity. The span at 160 to 186 (SGLGSLHGGGGGGNSGAAALGGSGSGS) shows a compositional bias: gly residues. Positions 191–250 (VRRYRTAFTREQIARLEKEFYRENYVSRPRRCELAAALNLPETTIKVWFQNRRMKDKRQR) form a DNA-binding region, homeobox.

Belongs to the even-skipped homeobox family.

The protein localises to the nucleus. The sequence is that of Homeobox even-skipped homolog protein 2 (Evx2) from Mus musculus (Mouse).